Reading from the N-terminus, the 1508-residue chain is Calponin homology domain-containing protein DDB_G0272472 (1508 aa).

6 disordered regions span residues 1 to 165, 197 to 290, 309 to 518, 531 to 561, 680 to 706, and 1036 to 1391; these read MFRN…KNDF, DSEE…NLSP, DFKS…TSIV, AANA…LFND, KEKQ…EKEL, and KIEK…KKSA. The span at 81–107 shows a compositional bias: low complexity; the sequence is SSSPSTSTTTTTKSSSTTTTTTTSSSS. The segment covering 208–222 has biased composition (basic and acidic residues); that stretch reads PIKKKQSNDLEKNIF. Composition is skewed to low complexity over residues 234-251, 263-290, and 315-332; these read KQST…QKQP, FGDS…NLSP, and SNNT…KSKP. Basic and acidic residues-rich tracts occupy residues 337–346 and 362–371; these read QKEEIKEVST and VDEKPKERST. Residues 380 to 391 show a composition bias toward polar residues; the sequence is KTVTVKSNNSFE. The segment covering 395–438 has biased composition (low complexity); that stretch reads FGSTTTNDDGGDNDFSFTPATTPSSSSSTKATTTSPSSTTTTKS. Residues 439–452 show a composition bias toward polar residues; sequence NINIGQKSNKSVDQ. Positions 455 to 498 form a coiled coil; it reads QFLNDIFQQEEQDKKRREEEAKLKQQQKQKEKEQIKDEIDDLFK. The segment covering 465–498 has biased composition (basic and acidic residues); sequence EQDKKRREEEAKLKQQQKQKEKEQIKDEIDDLFK. Low complexity-rich tracts occupy residues 500-516 and 531-557; these read SKPT…STTS and AANA…KSTN. Over residues 1036-1164 the composition is skewed to basic and acidic residues; that stretch reads KIEKEKEERD…DQEEKEKQLK (129 aa). 2 stretches are compositionally biased toward low complexity: residues 1165 to 1181 and 1189 to 1206; these read EQQQ…TTTT and DSDA…SSHS. A compositionally biased stretch (basic residues) spans 1216 to 1225; that stretch reads SKAKGRKKPT. Basic and acidic residues predominate over residues 1226–1235; it reads RRELTKDGNR. Positions 1333-1355 are enriched in low complexity; sequence PTVTQTTTTTTTPPTTPPSSSVQ. Residues 1362 to 1374 are compositionally biased toward polar residues; it reads RSFSGSSFMGINS. One can recognise a Calponin-homology (CH) domain in the interval 1397-1504; the sequence is MKALDVLLQW…YLSEFFKVMK (108 aa).

In Dictyostelium discoideum (Social amoeba), this protein is Calponin homology domain-containing protein DDB_G0272472.